We begin with the raw amino-acid sequence, 149 residues long: Large ribosomal subunit protein uL24 (149 aa).

A disordered region spans residues Arg-114–Glu-149. Positions Val-129–Glu-149 are enriched in basic and acidic residues.

It belongs to the universal ribosomal protein uL24 family. As to quaternary structure, part of the 50S ribosomal subunit.

Its function is as follows. One of two assembly initiator proteins, it binds directly to the 5'-end of the 23S rRNA, where it nucleates assembly of the 50S subunit. Located at the polypeptide exit tunnel on the outside of the subunit. This is Large ribosomal subunit protein uL24 from Methanopyrus kandleri (strain AV19 / DSM 6324 / JCM 9639 / NBRC 100938).